Reading from the N-terminus, the 76-residue chain is Kappa-actitoxin-Avd4g (76 aa).

A signal peptide spans 1-19 (MNKALFLCLVVLCAAVVFA). Residues 20-31 (AEDLQKAKHAPF) constitute a propeptide that is removed on maturation. 3 cysteine pairs are disulfide-bonded: C37/C72, C39/C65, and C55/C73.

This sequence belongs to the sea anemone type 3 (BDS) potassium channel toxin family. In terms of tissue distribution, moderately expressed in the ectodermal tissue from the distal and proximal tentacles, body wall, and oral disk.

The protein localises to the secreted. It localises to the nematocyst. Its function is as follows. Blocks Kv3 voltage-gated potassium channels. Reduces blood pressure. The chain is Kappa-actitoxin-Avd4g from Anemonia viridis (Snakelocks anemone).